Consider the following 318-residue polypeptide: Formimidoylglutamase (318 aa).

Residues histidine 124, aspartate 153, histidine 155, aspartate 157, cysteine 241, and aspartate 243 each coordinate Mn(2+).

Belongs to the arginase family. Requires Mn(2+) as cofactor.

The enzyme catalyses N-formimidoyl-L-glutamate + H2O = formamide + L-glutamate. It functions in the pathway amino-acid degradation; L-histidine degradation into L-glutamate; L-glutamate from N-formimidoyl-L-glutamate (hydrolase route): step 1/1. Functionally, catalyzes the conversion of N-formimidoyl-L-glutamate to L-glutamate and formamide. The polypeptide is Formimidoylglutamase (Fusobacterium nucleatum subsp. nucleatum (strain ATCC 25586 / DSM 15643 / BCRC 10681 / CIP 101130 / JCM 8532 / KCTC 2640 / LMG 13131 / VPI 4355)).